Reading from the N-terminus, the 511-residue chain is 2,3-bisphosphoglycerate-independent phosphoglycerate mutase (511 aa).

Asp-12 and Ser-62 together coordinate Mn(2+). The Phosphoserine intermediate role is filled by Ser-62. Substrate is bound by residues His-123, Arg-153–Asp-154, Arg-185, Arg-191, Arg-260–Arg-263, and Lys-333. Mn(2+)-binding residues include Asp-400, His-404, Asp-441, His-442, and His-460.

Belongs to the BPG-independent phosphoglycerate mutase family. In terms of assembly, monomer. It depends on Mn(2+) as a cofactor.

It carries out the reaction (2R)-2-phosphoglycerate = (2R)-3-phosphoglycerate. It participates in carbohydrate degradation; glycolysis; pyruvate from D-glyceraldehyde 3-phosphate: step 3/5. Its function is as follows. Catalyzes the interconversion of 2-phosphoglycerate and 3-phosphoglycerate. The sequence is that of 2,3-bisphosphoglycerate-independent phosphoglycerate mutase from Clostridium novyi (strain NT).